The sequence spans 519 residues: MAVLSSVSSLIPFSYGATRLTSKASLASRTSGFNLSSRWNSTRNSPMLYLSRAVTNNSGTTEISDNETAPRTYSWPDNKRPRVCILGGGFGGLYTALRLESLVWPEDKKPQVVLVDQSERFVFKPMLYELLSGEVDVWEIAPRFSDLLTNTGIQFLRDRVKTLLPCDHLGVNGSEISVTGGTVLLESGFKIEYDWLVLALGAESKLDVVPGAMELAFPFYTLEDAIRVNEKLSKLERKNFKDGSAIKVAVVGCGYAGVELAATISERLQDRGIVQSINVSKNILTSAPDGNREAAMKVLTSRKVQLLLGYLVQSIKRASNLEEDEGYFLELQPAERGLESQIIEADIVLWTVGAKPLLTKLEPSGPNVLPLNARGQAETDETLRVKGHPRIFALGDSSSLRDSNGKILPTTAQVAFQEADFTGWNIWAAINNRPLLPFRFQNLGEMMTLGRYDAAISPSFIEGLTLEGPIGHAARKLAYLIRLPTDEHRFKVGISWFAKSAVDSIALLQSNLTKVLSGS.

A chloroplast and mitochondrion-targeting transit peptide spans 1-52; that stretch reads MAVLSSVSSLIPFSYGATRLTSKASLASRTSGFNLSSRWNSTRNSPMLYLSR. 82 to 118 lines the FAD pocket; it reads RVCILGGGFGGLYTALRLESLVWPEDKKPQVVLVDQS. NAD(+) is bound at residue 246 to 282; sequence IKVAVVGCGYAGVELAATISERLQDRGIVQSINVSKN.

The protein belongs to the NADH dehydrogenase family. FAD serves as cofactor. As to expression, flowers, roots, leaves and stems.

The protein localises to the mitochondrion. The protein resides in the mitochondrion inner membrane. Its subcellular location is the plastid. It is found in the chloroplast. It localises to the plastoglobule. It carries out the reaction a quinone + NADH + H(+) = a quinol + NAD(+). The enzyme catalyses a ubiquinone + NADH + H(+) = a ubiquinol + NAD(+). It catalyses the reaction demethylphylloquinone + NADPH + H(+) = demethylphylloquinol + NADP(+). With respect to regulation, inhibited by dicumarol. In terms of biological role, bifunctional oxidoreductase ables to act both on prenyl naphthoquinones and on prenyl benzoquinones. May serve a respiratory function. Involved in an electron flow toward the plastoglobule plastoquinone pool. Required for plastochromanol-8 accumulation and for phylloquinone (vitamin K1) production. Probably not directly involved in cyclic or chlororespiratory electron flows under standard growth conditions, but participates in the redox metabolism of plastoquinone-9 and the tocophrol recycling-intermediate alpha-tocopherol quinone. Catalyzes the penultimate step in the biosynthesis of vitamin K1. The sequence is that of Alternative NAD(P)H-ubiquinone oxidoreductase C1, chloroplastic/mitochondrial from Arabidopsis thaliana (Mouse-ear cress).